A 338-amino-acid chain; its full sequence is Large ribosomal subunit protein uL10 (338 aa).

A disordered region spans residues 302-338 (IAAQPQPAEEAEEKVEEEEEEEKEEEEALAGLGALFG). Positions 310–329 (EEAEEKVEEEEEEEKEEEEA) are enriched in acidic residues.

The protein belongs to the universal ribosomal protein uL10 family. Part of the 50S ribosomal subunit. Forms part of the ribosomal stalk which helps the ribosome interact with GTP-bound translation factors. Forms a heptameric L10(L12)2(L12)2(L12)2 complex, where L10 forms an elongated spine to which the L12 dimers bind in a sequential fashion.

Its function is as follows. Forms part of the ribosomal stalk, playing a central role in the interaction of the ribosome with GTP-bound translation factors. The protein is Large ribosomal subunit protein uL10 of Thermococcus sibiricus (strain DSM 12597 / MM 739).